The primary structure comprises 81 residues: MAVNKNEYKILIMLKENQCTTELKSFTYTKLCNISKLSMSTVRRSIKKFLELQYVKEGCKQGISKTFYITPNGIEKLKSIM.

As to quaternary structure, monomer; probably dimerizes when bound to DNA. Binds to TubZ when associated with tubC DNA.

It localises to the host cytoplasm. Functionally, a DNA-binding protein that is part of the type III partition system presumably used to ensure correct segregation of this bacteriophage. Binds to tubC (centromere-like site) DNA upstream of its own gene in a sequence-specific fashion (consensus TTGAC); binds to multiple sites in the tubC region, probably spreading from an initial site. Upon binding to tubC forms flexible loops over about 1 kb of DNA that forms 2 rings, covering tubC and the promoter region. This probably shuts off transcription of the operon. DNA is both bent and untwisted by TubR. The TubR-tubC DNA complex binds to TubZ forming large bundles and decreasing TubZ's GTPase activity. The sequence is that of DNA-binding protein TubR from Clostridium botulinum C phage (Clostridium botulinum C bacteriophage).